Reading from the N-terminus, the 276-residue chain is Ribosomal RNA small subunit methyltransferase J (276 aa).

S-adenosyl-L-methionine contacts are provided by residues 135–136 (ER) and aspartate 191.

The protein belongs to the methyltransferase superfamily. RsmJ family.

The protein localises to the cytoplasm. It catalyses the reaction guanosine(1516) in 16S rRNA + S-adenosyl-L-methionine = N(2)-methylguanosine(1516) in 16S rRNA + S-adenosyl-L-homocysteine + H(+). Specifically methylates the guanosine in position 1516 of 16S rRNA. This chain is Ribosomal RNA small subunit methyltransferase J, found in Hydrogenovibrio crunogenus (strain DSM 25203 / XCL-2) (Thiomicrospira crunogena).